Here is a 301-residue protein sequence, read N- to C-terminus: Homeobox protein Hox-D13 (301 aa).

Disordered stretches follow at residues 1–20 and 55–75; these read MDGL…TPGQ and GERS…PGSG. Residues 8-18 show a composition bias toward gly residues; sequence SSGGGGGGGTP. Positions 234–293 form a DNA-binding region, homeobox; it reads GRKKRVPYTKLQLKELENEYAINKFINKDKRRRISAATNLSERQVTIWFQNRRVKDKKIV.

This sequence belongs to the Abd-B homeobox family.

The protein resides in the nucleus. Functionally, sequence-specific transcription factor that binds gene promoters and activates their transcription. Part of a developmental regulatory system that provides cells with specific positional identities on the anterior-posterior axis. The polypeptide is Homeobox protein Hox-D13 (HOXD13) (Gallus gallus (Chicken)).